We begin with the raw amino-acid sequence, 62 residues long: Synergistic-type venom protein C8S2, chain 1 (62 aa).

Intrachain disulfides connect C3/C24, C17/C42, and C46/C57.

It belongs to the three-finger toxin family. Short-chain subfamily. Aminergic toxin sub-subfamily. Heterodimer of C8S2 chain 1 and chain 2 (AC P01411); disulfide-linked. In terms of tissue distribution, expressed by the venom gland.

It is found in the secreted. Its function is as follows. This protein shows a synergetic toxic effect in that it enhances the toxicity of other toxins. This Dendroaspis angusticeps (Eastern green mamba) protein is Synergistic-type venom protein C8S2, chain 1.